Reading from the N-terminus, the 287-residue chain is Putative sugar uptake protein EF_0928 (287 aa).

A run of 10 helical transmembrane segments spans residues 5-27, 32-49, 53-71, 84-106, 116-134, 155-177, 182-200, 207-229, 234-256, and 265-284; these read IALVPMIAWGSIGLVSGKIGGSA, LGMTIGALLFSIVVFFVI, LTTATLIVGFISGLFWSLG, VSVGLPISTGMQLVVNTVAGAVF, FVVGFIALAFLVFGVYLTA, IRALIFSTVGYGVYTIIINATGL, IILPQSIGMLVGASFFAFK, FVWMNMTTGLLWGLGNICMLLTM, LAISFSLSQMGIIISTLGGIFLL, and MFYVIFGCIFVILGGILLGY.

This sequence belongs to the GRP transporter (TC 2.A.7.5) family.

It is found in the cell membrane. The chain is Putative sugar uptake protein EF_0928 from Enterococcus faecalis (strain ATCC 700802 / V583).